Consider the following 281-residue polypeptide: Radiation response metalloprotease IrrE (281 aa).

His-82 is a Zn(2+) binding site. Glu-83 is an active-site residue. The Zn(2+) site is built by His-86 and Glu-113. Residues 262–281 (LPAGRSEPDADKPEAPGDQS) form a disordered region. Positions 267 to 281 (SEPDADKPEAPGDQS) are enriched in basic and acidic residues.

In terms of assembly, interacts with DdrOC.

Protease activity is inhibited by EDTA. Its function is as follows. Plays a central regulatory role in DNA repair and protection pathways in response to radiation stress. Acts as a site-specific metalloprotease that cleaves and inactivates the repressor proteins DdrOC and DdrOP3, resulting in induced expression of genes required for DNA repair and cell survival after exposure to radiation. This is Radiation response metalloprotease IrrE from Deinococcus deserti (strain DSM 17065 / CIP 109153 / LMG 22923 / VCD115).